Consider the following 452-residue polypeptide: Phosphoglucosamine mutase (452 aa).

The Phosphoserine intermediate role is filled by Ser88. Mg(2+) is bound by residues Ser88, Asp234, Asp236, and Asp238. Ser88 carries the post-translational modification Phosphoserine.

This sequence belongs to the phosphohexose mutase family. Mg(2+) is required as a cofactor. Activated by phosphorylation.

It carries out the reaction alpha-D-glucosamine 1-phosphate = D-glucosamine 6-phosphate. Functionally, catalyzes the conversion of glucosamine-6-phosphate to glucosamine-1-phosphate. In Methanococcus aeolicus (strain ATCC BAA-1280 / DSM 17508 / OCM 812 / Nankai-3), this protein is Phosphoglucosamine mutase.